The following is a 79-amino-acid chain: Small cysteine-rich protein 2 (79 aa).

The signal sequence occupies residues 1 to 21; it reads MRSQHVLILLLGLVCASQVLG. Positions 22–35 are excised as a propeptide; sequence KHLTKVKAKALHYD.

Belongs to the Cnidaria small cysteine-rich protein (SCRiP) family. delta subfamily. In terms of processing, contains 4 disulfide bonds.

The protein localises to the secreted. It is found in the nematocyst. This recombinant protein induces severe neurotoxicity on zebrafish larvae (Danio rerio) at a concentration of 230 mg/ml, but does not show toxicity when injected in blowfly larvae (Sarcophaga falculata). All fish incubated with this protein died within 200 minutes of exposure. Has also been claimed to be implied in calcification, but this function seems improbable. The chain is Small cysteine-rich protein 2 from Acropora millepora (Staghorn coral).